A 2094-amino-acid chain; its full sequence is Protein Ycf2 (2094 aa).

ATP is bound at residue 1385–1392 (GPPETGRS).

This sequence belongs to the Ycf2 family.

It localises to the plastid. The protein resides in the chloroplast stroma. Functionally, probable ATPase of unknown function. Its presence in a non-photosynthetic plant (Epifagus virginiana) and experiments in tobacco indicate that it has an essential function which is probably not related to photosynthesis. This is Protein Ycf2 from Huperzia lucidula (Shining clubmoss).